The primary structure comprises 182 residues: Ribulose bisphosphate carboxylase small subunit, chloroplastic (182 aa).

Residues 1 to 58 (MASSMISSATIATVNCSSPAQANMVAPFTGLKSASAFPVTRKANNDITSLASNGGRVQ) constitute a chloroplast transit peptide.

Belongs to the RuBisCO small chain family. As to quaternary structure, heterohexadecamer of 8 large and 8 small subunits.

Its subcellular location is the plastid. The protein localises to the chloroplast. Functionally, ruBisCO catalyzes two reactions: the carboxylation of D-ribulose 1,5-bisphosphate, the primary event in carbon dioxide fixation, as well as the oxidative fragmentation of the pentose substrate. Both reactions occur simultaneously and in competition at the same active site. Although the small subunit is not catalytic it is essential for maximal activity. The protein is Ribulose bisphosphate carboxylase small subunit, chloroplastic of Gossypium hirsutum (Upland cotton).